A 558-amino-acid chain; its full sequence is Formate--tetrahydrofolate ligase (558 aa).

An ATP-binding site is contributed by 67 to 74; the sequence is TPAGEGKT.

The protein belongs to the formate--tetrahydrofolate ligase family.

It carries out the reaction (6S)-5,6,7,8-tetrahydrofolate + formate + ATP = (6R)-10-formyltetrahydrofolate + ADP + phosphate. Its pathway is one-carbon metabolism; tetrahydrofolate interconversion. This is Formate--tetrahydrofolate ligase from Ruegeria pomeroyi (strain ATCC 700808 / DSM 15171 / DSS-3) (Silicibacter pomeroyi).